The sequence spans 494 residues: 3-octaprenyl-4-hydroxybenzoate carboxy-lyase (494 aa).

Residue asparagine 172 participates in Mn(2+) binding. Residues 175–177, 189–191, and 194–195 each bind prenylated FMN; these read IYR, RWL, and RG. Mn(2+) is bound at residue glutamate 238. The Proton donor role is filled by aspartate 294.

The protein belongs to the UbiD family. In terms of assembly, homohexamer. Prenylated FMN serves as cofactor. It depends on Mn(2+) as a cofactor.

The protein resides in the cell membrane. The enzyme catalyses a 4-hydroxy-3-(all-trans-polyprenyl)benzoate + H(+) = a 2-(all-trans-polyprenyl)phenol + CO2. Its pathway is cofactor biosynthesis; ubiquinone biosynthesis. Its function is as follows. Catalyzes the decarboxylation of 3-octaprenyl-4-hydroxy benzoate to 2-octaprenylphenol, an intermediate step in ubiquinone biosynthesis. The polypeptide is 3-octaprenyl-4-hydroxybenzoate carboxy-lyase (Janthinobacterium sp. (strain Marseille) (Minibacterium massiliensis)).